The chain runs to 575 residues: Isocitrate dehydrogenase kinase/phosphatase (575 aa).

Residues 316-322 (ARGDKGL) and Lys-337 contribute to the ATP site. Residue Asp-372 is part of the active site.

It belongs to the AceK family.

Its subcellular location is the cytoplasm. It catalyses the reaction L-seryl-[isocitrate dehydrogenase] + ATP = O-phospho-L-seryl-[isocitrate dehydrogenase] + ADP + H(+). Bifunctional enzyme which can phosphorylate or dephosphorylate isocitrate dehydrogenase (IDH) on a specific serine residue. This is a regulatory mechanism which enables bacteria to bypass the Krebs cycle via the glyoxylate shunt in response to the source of carbon. When bacteria are grown on glucose, IDH is fully active and unphosphorylated, but when grown on acetate or ethanol, the activity of IDH declines drastically concomitant with its phosphorylation. The sequence is that of Isocitrate dehydrogenase kinase/phosphatase from Anaeromyxobacter sp. (strain Fw109-5).